A 381-amino-acid polypeptide reads, in one-letter code: Molybdenum import ATP-binding protein ModC (381 aa).

Residues 5 to 238 enclose the ABC transporter domain; it reads SRSIQAQFRG…PALPLAASRD (234 aa). ATP is bound at residue 37–44; the sequence is GPSGCGKS. A Mop domain is found at 297-367; it reads NTSILNVLPA…VKGVALAPGR (71 aa).

Belongs to the ABC transporter superfamily. Molybdate importer (TC 3.A.1.8) family. As to quaternary structure, the complex is composed of two ATP-binding proteins (ModC), two transmembrane proteins (ModB) and a solute-binding protein (ModA).

Its subcellular location is the cell inner membrane. The enzyme catalyses molybdate(out) + ATP + H2O = molybdate(in) + ADP + phosphate + H(+). Functionally, part of the ABC transporter complex ModABC involved in molybdenum import. Responsible for energy coupling to the transport system. The polypeptide is Molybdenum import ATP-binding protein ModC (Rhodopseudomonas palustris (strain BisB18)).